Reading from the N-terminus, the 393-residue chain is Diphosphomevalonate decarboxylase (393 aa).

(R)-5-diphosphomevalonate-binding positions include 21–24 (YWGK), R77, 156–161 (SGSACR), and T212.

This sequence belongs to the diphosphomevalonate decarboxylase family. In terms of assembly, homodimer.

It localises to the cytoplasm. The protein localises to the nucleus. It catalyses the reaction (R)-5-diphosphomevalonate + ATP = isopentenyl diphosphate + ADP + phosphate + CO2. It participates in isoprenoid biosynthesis; isopentenyl diphosphate biosynthesis via mevalonate pathway; isopentenyl diphosphate from (R)-mevalonate: step 3/3. Its function is as follows. Diphosphomevalonate decarboxylase; part of the second module of ergosterol biosynthesis pathway that includes the middle steps of the pathway. Mvd1 converts diphosphomevalonate into isopentenyl diphosphate. The second module is carried out in the vacuole and involves the formation of farnesyl diphosphate, which is also an important intermediate in the biosynthesis of ubiquinone, dolichol, heme and prenylated proteins. Activity by the mevalonate kinase erg12 first converts mevalonate into 5-phosphomevalonate. 5-phosphomevalonate is then further converted to 5-diphosphomevalonate by the phosphomevalonate kinase erg8. The diphosphomevalonate decarboxylase mvd1 then produces isopentenyl diphosphate. The isopentenyl-diphosphate delta-isomerase idi1 then catalyzes the 1,3-allylic rearrangement of the homoallylic substrate isopentenyl (IPP) to its highly electrophilic allylic isomer, dimethylallyl diphosphate (DMAPP). Finally the farnesyl diphosphate synthase fps1 catalyzes the sequential condensation of isopentenyl pyrophosphate with dimethylallyl pyrophosphate, and then with the resultant geranylpyrophosphate to the ultimate product farnesyl pyrophosphate. This Schizosaccharomyces pombe (strain 972 / ATCC 24843) (Fission yeast) protein is Diphosphomevalonate decarboxylase (mvd1).